The primary structure comprises 352 residues: MEDSQETSPSSNNSSEELSSALHLSKGMSIFLDILRRADKNDDGKLSFEEFKAYFADGVLSGEELHELFHTIDTHNTNNLDTEELCEYFSQHLGEYENVLAALEDLNLSILKAMGKTKKDYQEASNLEQFVTRFLLKETLNQLQSLQNSLECAMETTEEQTRQERQGPAKPEVLSIQWPGKRSSRRVQRHNSFSPNSPQFNVSGPGLLEEDNQWMTQINRLQKLIDRLEKKDLKLEPLEEEIIEGNTKSHIMLVQRQMSVIEEDLEEFQLALKHYVESASSQSGCLRISIQKLSNESRYMIYEFWENSSVWNSHLQTNYSKTFQRSNVDFLETPELTSTMLVPASWWILNNN.

Residue Ser-4 is modified to Phosphoserine. EF-hand domains lie at 26–61 (KGMSIFLDILRRADKNDDGKLSFEEFKAYFADGVLS) and 60–95 (LSGEELHELFHTIDTHNTNNLDTEELCEYFSQHLGE). Positions 39, 41, 43, 45, and 50 each coordinate Ca(2+). A coiled-coil region spans residues 135–163 (LLKETLNQLQSLQNSLECAMETTEEQTRQ). Positions 180 to 202 (GKRSSRRVQRHNSFSPNSPQFNV) are disordered. The span at 190–202 (HNSFSPNSPQFNV) shows a compositional bias: polar residues. Ser-192 and Ser-197 each carry phosphoserine. The stretch at 209 to 275 (EEDNQWMTQI…EEFQLALKHY (67 aa)) forms a coiled coil. Positions 252–340 (MLVQRQMSVI…LETPELTSTM (89 aa)) constitute an ABM domain.

As to quaternary structure, interacts with STX1. May interact with CPNE6.

Its subcellular location is the cytoplasm. This Pongo abelii (Sumatran orangutan) protein is N-terminal EF-hand calcium-binding protein 1 (NECAB1).